The following is a 102-amino-acid chain: Small ribosomal subunit protein uS10 (102 aa).

Belongs to the universal ribosomal protein uS10 family. Part of the 30S ribosomal subunit.

In terms of biological role, involved in the binding of tRNA to the ribosomes. This chain is Small ribosomal subunit protein uS10, found in Shouchella clausii (strain KSM-K16) (Alkalihalobacillus clausii).